The following is a 266-amino-acid chain: MATKILSLLALLALFASATNAFIIPQCSLAPSSIITQFLPPVTSMGFEHPAVQAYRLQQAIAASVLQQPISQLQQQSLAHLTIQTIATQQQQQFLPALSHLAMVNPAAYLQQQLLASNPLALANVVANQPQQQLQQFLPALSQLAMVNPAAYLQQQQLLSSSPLAVANAPTYLQQQLLQQIVPALTQLVVANPAAYLQQLLPFNQLTMSNSAAYLQQRQQLLNPLAVANPLVAAFLQQQQLLPYNQFSLINPVLSRQQPIVGGAIF.

Positions 1–21 (MATKILSLLALLALFASATNA) are cleaved as a signal peptide.

This sequence belongs to the zein family. As to quaternary structure, interacts with OP10 (via N-terminus). In terms of tissue distribution, expressed in endosperm, mainly in the peripheral regions.

Zeins are major seed storage proteins. In Zea mays (Maize), this protein is 22 kDa alpha-zein 4.